The chain runs to 290 residues: UPF0761 membrane protein YihY (290 aa).

A run of 6 helical transmembrane segments spans residues 44 to 64, 104 to 124, 140 to 160, 183 to 203, 210 to 230, and 244 to 264; these read LLSL…FPMF, VGAC…DSAL, FAVY…SLAI, IFPL…VPTI, AIVG…GFAL, and VLAV…IVLL.

This sequence belongs to the UPF0761 family.

The protein resides in the cell inner membrane. This Escherichia coli O127:H6 (strain E2348/69 / EPEC) protein is UPF0761 membrane protein YihY.